Reading from the N-terminus, the 173-residue chain is Large ribosomal subunit protein uL10 (173 aa).

Belongs to the universal ribosomal protein uL10 family. As to quaternary structure, part of the ribosomal stalk of the 50S ribosomal subunit. The N-terminus interacts with L11 and the large rRNA to form the base of the stalk. The C-terminus forms an elongated spine to which L12 dimers bind in a sequential fashion forming a multimeric L10(L12)X complex.

Forms part of the ribosomal stalk, playing a central role in the interaction of the ribosome with GTP-bound translation factors. The protein is Large ribosomal subunit protein uL10 of Thermus thermophilus (strain ATCC BAA-163 / DSM 7039 / HB27).